The sequence spans 1865 residues: Transcription initiation factor TFIID subunit 1 (1865 aa).

Residues 1-27 (MLLPATGASRSAAIMSDTDSDEDSSGG) form a disordered region. Residues 1-409 (MLLPATGASR…VTQLHWEDDI (409 aa)) enclose the Protein kinase 1 domain. The residue at position 131 (S131) is a Phosphoserine; by autocatalysis. Residues 144–199 (EDIDCKLMPPPPPPPGPVKKEKDQDGLTGEKVDFSSSSDSESEMGPQEAAQAESKD) form a disordered region. The span at 151–160 (MPPPPPPPGP) shows a compositional bias: pro residues. A compositionally biased stretch (basic and acidic residues) spans 161-176 (VKKEKDQDGLTGEKVD). The residue at position 302 (S302) is a Phosphoserine; by autocatalysis. Positions 509–530 (PDEKEEATSNSPSKENKKESSL) are disordered. The tract at residues 512-971 (KEEATSNSPS…KIPNKPTQQK (460 aa)) is histone acetyltransferase (HAT). K539 bears the N6-acetyllysine mark. Glycyl lysine isopeptide (Lys-Gly) (interchain with G-Cter in SUMO2) cross-links involve residues K544 and K557. Disordered stretches follow at residues 964–983 (PNKP…KKTV) and 1228–1252 (RLKR…MKER). 2 stretches are compositionally biased toward basic and acidic residues: residues 969–978 (QQKDDKEPQP) and 1228–1244 (RLKR…PPEK). The HMG box DNA-binding region spans 1190–1268 (VRIRTTKDEE…CGACGAIGHM (79 aa)). Residues 1337–1624 (VLKFPKQQLP…TAKEAALEEA (288 aa)) are interaction with ASF1A and ASF1B. The Nuclear localization signal signature appears at 1346–1353 (PPKKKRRV). Bromo domains are found at residues 1371 to 1479 (RRRT…LKEK) and 1493 to 1602 (LLDD…LTEY). Positions 1420 to 1865 (MDLQTLRENV…AGDSDMDSDE (446 aa)) constitute a Protein kinase 2 domain. The tract at residues 1625-1865 (ELESLDPMTP…AGDSDMDSDE (241 aa)) is disordered. Residues 1633 to 1642 (TPGPYTPQPP) are compositionally biased toward pro residues. Polar residues predominate over residues 1646-1682 (DNSTSLSVSRDASVYQDESNMSVLDIPSATSEKQLTQ). S1664 and S1667 each carry phosphoserine. Composition is skewed to acidic residues over residues 1683 to 1697 (EGED…EEEG) and 1715 to 1730 (EGED…EEGD). The span at 1739-1751 (SESGSDSDVGSGS) shows a compositional bias: low complexity. Residues S1773, S1776, and S1794 each carry the phosphoserine modification. The span at 1804-1814 (KSNTQDTSFSS) shows a compositional bias: polar residues. Acidic residues predominate over residues 1820 to 1829 (VSEEEEDEEE). Residue S1821 is modified to Phosphoserine. Residues 1832 to 1841 (SGPSVLSQVH) show a composition bias toward polar residues.

It belongs to the TAF1 family. Component of the TFIID basal transcription factor complex, composed of TATA-box-binding protein TBP, and a number of TBP-associated factors (TAFs), including TAF1, TAF2, TAF3, TAF4, TAF5, TAF6, TAF7, TAF8, TAF9, TAF10, TAF11, TAF12 and TAF13. Interacts with TAF7; the interaction is direct. TAF1, when part of the TFIID complex, interacts with C-terminus of TP53. Part of a TFIID-containing RNA polymerase II pre-initiation complex that is composed of TBP and at least GTF2A1, GTF2A2, GTF2E1, GTF2E2, GTF2F1, GTF2H2, GTF2H3, GTF2H4, GTF2H5, GTF2B, TCEA1, ERCC2, ERCC3, TAF1, TAF2, TAF3, TAF4, TAF5, TAF6, TAF7, TAF8, TAF9, TAF10, TAF11, TAF12 and TAF13. Component of some MLL1/MLL complex, at least composed of the core components KMT2A/MLL1, ASH2L, HCFC1/HCF1, WDR5 and RBBP5, as well as the facultative components BACC1, CHD8, E2F6, HSP70, INO80C, KANSL1, LAS1L, MAX, MCRS1, MGA, KAT8/MOF, PELP1, PHF20, PRP31, RING2, RUVB1/TIP49A, RUVB2/TIP49B, SENP3, TAF1, TAF4, TAF6, TAF7, TAF9 and TEX10. RB1 interacts with the N-terminal domain of TAF1. Interacts with ASF1A and ASF1B. Interacts (via bromo domains) with acetylated lysine residues on the N-terminus of histone H1.4, H2A, H2B, H3 and H4 (in vitro). Mg(2+) serves as cofactor. Post-translationally, phosphorylated by casein kinase II in vitro.

It localises to the nucleus. It catalyses the reaction L-seryl-[protein] + ATP = O-phospho-L-seryl-[protein] + ADP + H(+). The catalysed reaction is L-threonyl-[protein] + ATP = O-phospho-L-threonyl-[protein] + ADP + H(+). It carries out the reaction L-lysyl-[protein] + acetyl-CoA = N(6)-acetyl-L-lysyl-[protein] + CoA + H(+). Autophosphorylates on Ser residues. Inhibited by retinoblastoma tumor suppressor protein, RB1. Binding to TAF1 or CIITA inhibits the histone acetyltransferase activity. Its function is as follows. The TFIID basal transcription factor complex plays a major role in the initiation of RNA polymerase II (Pol II)-dependent transcription. TFIID recognizes and binds promoters with or without a TATA box via its subunit TBP, a TATA-box-binding protein, and promotes assembly of the pre-initiation complex (PIC). The TFIID complex consists of TBP and TBP-associated factors (TAFs), including TAF1, TAF2, TAF3, TAF4, TAF5, TAF6, TAF7, TAF8, TAF9, TAF10, TAF11, TAF12 and TAF13. TAF1 is the largest component and core scaffold of the TFIID complex, involved in nucleating complex assembly. TAF1 forms a promoter DNA binding subcomplex of TFIID, together with TAF7 and TAF2. Contains novel N- and C-terminal Ser/Thr kinase domains which can autophosphorylate or transphosphorylate other transcription factors. Phosphorylates TP53 on 'Thr-55' which leads to MDM2-mediated degradation of TP53. Phosphorylates GTF2A1 and GTF2F1 on Ser residues. Possesses DNA-binding activity. Essential for progression of the G1 phase of the cell cycle. The polypeptide is Transcription initiation factor TFIID subunit 1 (Mesocricetus auratus (Golden hamster)).